A 207-amino-acid chain; its full sequence is Small ribosomal subunit protein uS4 (207 aa).

Residues 31–54 (KSKFETKPGQHGRTSGSRTSDFGL) are disordered. Residues 42–52 (GRTSGSRTSDF) are compositionally biased toward polar residues. Residues 97-158 (SRLDNVVYRM…KAKKQLRVTE (62 aa)) form the S4 RNA-binding domain.

Belongs to the universal ribosomal protein uS4 family. Part of the 30S ribosomal subunit. Contacts protein S5. The interaction surface between S4 and S5 is involved in control of translational fidelity.

Functionally, one of the primary rRNA binding proteins, it binds directly to 16S rRNA where it nucleates assembly of the body of the 30S subunit. In terms of biological role, with S5 and S12 plays an important role in translational accuracy. This is Small ribosomal subunit protein uS4 from Methylibium petroleiphilum (strain ATCC BAA-1232 / LMG 22953 / PM1).